Reading from the N-terminus, the 236-residue chain is 2-C-methyl-D-erythritol 4-phosphate cytidylyltransferase (236 aa).

The protein belongs to the IspD/TarI cytidylyltransferase family. IspD subfamily.

It catalyses the reaction 2-C-methyl-D-erythritol 4-phosphate + CTP + H(+) = 4-CDP-2-C-methyl-D-erythritol + diphosphate. It participates in isoprenoid biosynthesis; isopentenyl diphosphate biosynthesis via DXP pathway; isopentenyl diphosphate from 1-deoxy-D-xylulose 5-phosphate: step 2/6. Its function is as follows. Catalyzes the formation of 4-diphosphocytidyl-2-C-methyl-D-erythritol from CTP and 2-C-methyl-D-erythritol 4-phosphate (MEP). The protein is 2-C-methyl-D-erythritol 4-phosphate cytidylyltransferase of Pseudomonas savastanoi pv. phaseolicola (strain 1448A / Race 6) (Pseudomonas syringae pv. phaseolicola (strain 1448A / Race 6)).